A 240-amino-acid chain; its full sequence is Regulatory protein RecX (240 aa).

This sequence belongs to the RecX family.

The protein localises to the cytoplasm. Its function is as follows. Modulates RecA activity. This Lacticaseibacillus paracasei (strain ATCC 334 / BCRC 17002 / CCUG 31169 / CIP 107868 / KCTC 3260 / NRRL B-441) (Lactobacillus paracasei) protein is Regulatory protein RecX.